Consider the following 273-residue polypeptide: NH(3)-dependent NAD(+) synthetase (273 aa).

An ATP-binding site is contributed by 46-53; it reads GISGGQDS. Asp-52 is a binding site for Mg(2+). Arg-139 is a binding site for deamido-NAD(+). ATP is bound at residue Thr-159. Glu-164 provides a ligand contact to Mg(2+). Deamido-NAD(+) is bound by residues Lys-172 and Asp-179. 2 residues coordinate ATP: Lys-188 and Thr-210. 259–260 is a deamido-NAD(+) binding site; the sequence is HK.

The protein belongs to the NAD synthetase family. Homodimer.

It carries out the reaction deamido-NAD(+) + NH4(+) + ATP = AMP + diphosphate + NAD(+) + H(+). The protein operates within cofactor biosynthesis; NAD(+) biosynthesis; NAD(+) from deamido-NAD(+) (ammonia route): step 1/1. Functionally, catalyzes the ATP-dependent amidation of deamido-NAD to form NAD. Uses ammonia as a nitrogen source. The protein is NH(3)-dependent NAD(+) synthetase of Mycobacteroides abscessus (strain ATCC 19977 / DSM 44196 / CCUG 20993 / CIP 104536 / JCM 13569 / NCTC 13031 / TMC 1543 / L948) (Mycobacterium abscessus).